Reading from the N-terminus, the 278-residue chain is Small ribosomal subunit protein uS2 (278 aa).

Residues 233-258 (IDMEAAGEAPANKGKKKSAKARLDKS) are disordered.

This sequence belongs to the universal ribosomal protein uS2 family.

This Bacteroides fragilis (strain ATCC 25285 / DSM 2151 / CCUG 4856 / JCM 11019 / LMG 10263 / NCTC 9343 / Onslow / VPI 2553 / EN-2) protein is Small ribosomal subunit protein uS2.